A 405-amino-acid polypeptide reads, in one-letter code: Palmitoyltransferase PFA3 (405 aa).

Topologically, residues 1 to 27 (MLISHPRIMIRHAPWVTSIETFCCSLA) are cytoplasmic. The chain crosses the membrane as a helical span at residues 28–48 (TLFPKVFYTSVLTWSVYALIV). At 49-62 (HGCYDTLMTTQETS) the chain is on the lumenal side. A helical membrane pass occupies residues 63-83 (IFAIAIGLIGLTLYILCLYTY). The Cytoplasmic portion of the chain corresponds to 84–214 (FKVLRAGPGS…GFYNHKFFAQ (131 aa)). The region spanning 167 to 217 (RYCTKCSVWKPDRCHHCSTCNRCVLRMDHHCPWFAMCVGFYNHKFFAQFLM) is the DHHC domain. Residues 215–235 (FLMYLTAYSGFDFVVSLSILW) traverse the membrane as a helical segment. The Lumenal portion of the chain corresponds to 236-251 (KFFADEKYNDHYLSLN). A helical membrane pass occupies residues 252–272 (LVFLFVLSLAFFITVGGFSAF). The Cytoplasmic portion of the chain corresponds to 273 to 405 (SLYLVFRNKT…ANQTTDTNPF (133 aa)).

The protein belongs to the DHHC palmitoyltransferase family. PFA3 subfamily. Post-translationally, autopalmitoylated.

Its subcellular location is the vacuole membrane. The catalysed reaction is L-cysteinyl-[protein] + hexadecanoyl-CoA = S-hexadecanoyl-L-cysteinyl-[protein] + CoA. Its function is as follows. Palmitoyltransferase specific for VAC8. Palmitoylates VAC8 at one or more of its N-terminal cysteine residues, which is required for its proper membrane localization. This is Palmitoyltransferase PFA3 (PFA3) from Debaryomyces hansenii (strain ATCC 36239 / CBS 767 / BCRC 21394 / JCM 1990 / NBRC 0083 / IGC 2968) (Yeast).